A 608-amino-acid chain; its full sequence is Glutamine--fructose-6-phosphate aminotransferase [isomerizing] (608 aa).

Cys2 functions as the Nucleophile; for GATase activity in the catalytic mechanism. The Glutamine amidotransferase type-2 domain occupies 2–218; it reads CGICGIVGHQ…DGDWCELTPD (217 aa). 2 SIS domains span residues 284-423 and 456-598; these read MPFD…ARGT and MAAV…VDQP. Lys603 (for Fru-6P isomerization activity) is an active-site residue.

Homodimer.

It localises to the cytoplasm. It carries out the reaction D-fructose 6-phosphate + L-glutamine = D-glucosamine 6-phosphate + L-glutamate. Functionally, catalyzes the first step in hexosamine metabolism, converting fructose-6P into glucosamine-6P using glutamine as a nitrogen source. This Gluconobacter oxydans (strain 621H) (Gluconobacter suboxydans) protein is Glutamine--fructose-6-phosphate aminotransferase [isomerizing].